The chain runs to 148 residues: Cystatin-C (148 aa).

The N-terminal stretch at 1–30 (MVGSPRAPLLLLASLIVALALALAVSPAAA) is a signal peptide. At Gln-31 the chain carries Pyrrolidone carboxylic acid. The Secondary area of contact signature appears at 84 to 88 (QVVSG). Disulfide bonds link Cys-102/Cys-112 and Cys-126/Cys-146.

It is found in the secreted. In terms of biological role, this is a thiol proteinase inhibitor. This Bos taurus (Bovine) protein is Cystatin-C (CST3).